A 276-amino-acid polypeptide reads, in one-letter code: Zinc transporter ZTP29 (276 aa).

Over 1-6 (MDSQML) the chain is Cytoplasmic. A helical transmembrane segment spans residues 7–27 (VALGLSLVGGLSTSLGALFVV). Residues 28–35 (LSETPNMK) lie on the Lumenal side of the membrane. The helical transmembrane segment at 36 to 56 (MLGLLQGFASGLMLSISFLDL) threads the bilayer. Residues 57–63 (AHNAINS) lie on the Cytoplasmic side of the membrane. Residues 64-84 (IGFFKANLWFFGGVIFFACIT) traverse the membrane as a helical segment. Over 85–123 (KFIPEPTLGPSTDGKRRKKNGDEGGKDMMKKHRKQVLYS) the chain is Lumenal. Residues 124-144 (GLITAIGISLHNFPEGMAVFL) traverse the membrane as a helical segment. At 145 to 156 (GSIKGMRVGVNL) the chain is on the cytoplasmic side. A helical transmembrane segment spans residues 157-177 (ALAIALHNIPEGVAVALPIYF). The Lumenal portion of the chain corresponds to 178–187 (ATESKWQAFK). Residues 188-208 (LATLSGLAEPLGVIIVAYLFP) traverse the membrane as a helical segment. The Cytoplasmic portion of the chain corresponds to 209–219 (RSLSPEILEGL). Residues 220–240 (LGAVGGIMAFLTLHEMLPLAF) form a helical membrane-spanning segment. The Lumenal portion of the chain corresponds to 241–250 (DYAGQKQAVK). A helical transmembrane segment spans residues 251–271 (AVFFGMACMSASLYFLELSLP). Topologically, residues 272 to 276 (ETMSL) are cytoplasmic.

Belongs to the ZIP transporter (TC 2.A.5) family. ZupT subfamily. As to expression, expressed in hypocotyls, cotyledons, leaves and anthers.

It localises to the endoplasmic reticulum membrane. Functionally, zinc transporter involved response to salt stress. May act through the regulation of zinc levels required to induce the unfolded protein response (UPR) pathway. The polypeptide is Zinc transporter ZTP29 (ZTP29) (Arabidopsis thaliana (Mouse-ear cress)).